The chain runs to 377 residues: S-adenosylmethionine synthase (377 aa).

His-14 is a binding site for ATP. Asp-16 serves as a coordination point for Mg(2+). Glu-42 provides a ligand contact to K(+). Gln-98 is a binding site for L-methionine. The flexible loop stretch occupies residues 98–108 (QSADIALGIDL). ATP is bound by residues 162-164 (DMK), 228-229 (RF), Asp-237, 243-244 (RK), Ala-260, and Lys-264. Asp-237 is a binding site for L-methionine. Position 268 (Lys-268) interacts with L-methionine.

Belongs to the AdoMet synthase family. As to quaternary structure, homotetramer; dimer of dimers. Mg(2+) serves as cofactor. K(+) is required as a cofactor.

It is found in the cytoplasm. The catalysed reaction is L-methionine + ATP + H2O = S-adenosyl-L-methionine + phosphate + diphosphate. The protein operates within amino-acid biosynthesis; S-adenosyl-L-methionine biosynthesis; S-adenosyl-L-methionine from L-methionine: step 1/1. Catalyzes the formation of S-adenosylmethionine (AdoMet) from methionine and ATP. The overall synthetic reaction is composed of two sequential steps, AdoMet formation and the subsequent tripolyphosphate hydrolysis which occurs prior to release of AdoMet from the enzyme. This is S-adenosylmethionine synthase from Mesoplasma florum (strain ATCC 33453 / NBRC 100688 / NCTC 11704 / L1) (Acholeplasma florum).